The sequence spans 460 residues: MDSIVTTEDTIAAIASAISIGKGGVAIIRVSGKDSINSCKKIVQTKSKYAWESHRVFHGFILENKQNKFIDEVLILVMKSPNSFTGEDVVELHCHGGIILVNKVLQRLLSSNSRVRLANPGEFSQRAFLNGKIDLTQAESINQLINASNTRSAELAFSGVQGKIKKKINDIKNDLINQLCEIEARVDFEEDFTDFDYNKYLKNIKKVKEKIELLIENAKRNSYIHNGISIALIGKTNVGKSSLLNLLAKKEKAIVTNIPGTTRDVIEVNLTINDIPMKIIDTAGIRETHEQIESIGIKKSFRKIKESDFIIYIYSLEEGFNKEDKKIIQEIPKEKLITILGNKKDLIDCKNINSNELKNTILMSIKNNDGERLLIDTIIKKCGLKQVENINIFLNERHLTNLSSCLSNLNDTDVIIKNKLPFDLLSIELRDGIQNLSKITGQELTEELLDNIFSKFCIGK.

3 residues coordinate (6S)-5-formyl-5,6,7,8-tetrahydrofolate: arginine 29, glutamate 91, and lysine 132. The 157-residue stretch at 227–383 (GISIALIGKT…LIDTIIKKCG (157 aa)) folds into the TrmE-type G domain. Residue asparagine 237 participates in K(+) binding. Residues 237–242 (NVGKSS), 256–262 (TNIPGTT), and 281–284 (DTAG) each bind GTP. Serine 241 is a Mg(2+) binding site. K(+)-binding residues include threonine 256, isoleucine 258, and threonine 261. Threonine 262 contacts Mg(2+). Lysine 460 is a binding site for (6S)-5-formyl-5,6,7,8-tetrahydrofolate.

Belongs to the TRAFAC class TrmE-Era-EngA-EngB-Septin-like GTPase superfamily. TrmE GTPase family. Homodimer. Heterotetramer of two MnmE and two MnmG subunits. K(+) serves as cofactor.

It is found in the cytoplasm. Exhibits a very high intrinsic GTPase hydrolysis rate. Involved in the addition of a carboxymethylaminomethyl (cmnm) group at the wobble position (U34) of certain tRNAs, forming tRNA-cmnm(5)s(2)U34. The chain is tRNA modification GTPase MnmE from Prochlorococcus marinus (strain MIT 9312).